The chain runs to 286 residues: Bifunctional protein FolD (286 aa).

Residues 165-167 (GRS), serine 190, and valine 231 contribute to the NADP(+) site.

It belongs to the tetrahydrofolate dehydrogenase/cyclohydrolase family. Homodimer.

The catalysed reaction is (6R)-5,10-methylene-5,6,7,8-tetrahydrofolate + NADP(+) = (6R)-5,10-methenyltetrahydrofolate + NADPH. It carries out the reaction (6R)-5,10-methenyltetrahydrofolate + H2O = (6R)-10-formyltetrahydrofolate + H(+). It functions in the pathway one-carbon metabolism; tetrahydrofolate interconversion. Catalyzes the oxidation of 5,10-methylenetetrahydrofolate to 5,10-methenyltetrahydrofolate and then the hydrolysis of 5,10-methenyltetrahydrofolate to 10-formyltetrahydrofolate. In Bacillus cereus (strain ZK / E33L), this protein is Bifunctional protein FolD.